Here is a 92-residue protein sequence, read N- to C-terminus: Small ribosomal subunit protein uS19 (92 aa).

Belongs to the universal ribosomal protein uS19 family.

Its function is as follows. Protein S19 forms a complex with S13 that binds strongly to the 16S ribosomal RNA. The polypeptide is Small ribosomal subunit protein uS19 (Sinorhizobium medicae (strain WSM419) (Ensifer medicae)).